Consider the following 133-residue polypeptide: ATP synthase epsilon chain, chloroplastic (133 aa).

It belongs to the ATPase epsilon chain family. In terms of assembly, F-type ATPases have 2 components, CF(1) - the catalytic core - and CF(0) - the membrane proton channel. CF(1) has five subunits: alpha(3), beta(3), gamma(1), delta(1), epsilon(1). CF(0) has three main subunits: a, b and c.

Its subcellular location is the plastid. The protein localises to the chloroplast thylakoid membrane. Functionally, produces ATP from ADP in the presence of a proton gradient across the membrane. This Cyanidium caldarium (Red alga) protein is ATP synthase epsilon chain, chloroplastic.